A 523-amino-acid polypeptide reads, in one-letter code: NAD(P)H-quinone oxidoreductase subunit 2 (523 aa).

13 helical membrane-spanning segments follow: residues 30-50 (VGPEAAVLVAMIATLLVDLAG), 57-77 (WVPPICYAGLGSALVLLALQW), 94-114 (LAIAFRAVVALSTLLSLLISW), 128-148 (AAILLAATLGGMLLCGATDLV), 182-202 (LLVGSAAAAVFLYGASLLYGL), 223-243 (AALALVFVLATVAFKIAAVPF), 255-275 (PTPVVAFLSVGSKAAGFALAL), 291-311 (LLFTVLAILSMTLGNVVALAQ), 317-337 (MLAYSSIGQAGFVMIGLVCGT), 345-365 (VLYMATYLFMNLGAFACIILF), 389-409 (LGLSLCLLSLGGIPPMLGFFG), 424-444 (VLVVVGLVTSVISIYYYIGVI), and 477-497 (VALVLCVLVTAVGGILSNPLF).

It belongs to the complex I subunit 2 family. NDH-1 can be composed of about 15 different subunits; different subcomplexes with different compositions have been identified which probably have different functions.

Its subcellular location is the cellular thylakoid membrane. It catalyses the reaction a plastoquinone + NADH + (n+1) H(+)(in) = a plastoquinol + NAD(+) + n H(+)(out). The enzyme catalyses a plastoquinone + NADPH + (n+1) H(+)(in) = a plastoquinol + NADP(+) + n H(+)(out). In terms of biological role, NDH-1 shuttles electrons from an unknown electron donor, via FMN and iron-sulfur (Fe-S) centers, to quinones in the respiratory and/or the photosynthetic chain. The immediate electron acceptor for the enzyme in this species is believed to be plastoquinone. Couples the redox reaction to proton translocation, and thus conserves the redox energy in a proton gradient. Cyanobacterial NDH-1 also plays a role in inorganic carbon-concentration. This Synechococcus sp. (strain CC9311) protein is NAD(P)H-quinone oxidoreductase subunit 2.